A 734-amino-acid polypeptide reads, in one-letter code: Photosystem I P700 chlorophyll a apoprotein A2 (734 aa).

A run of 8 helical transmembrane segments spans residues 46 to 69 (IFAS…FHVA), 135 to 158 (LYTG…LHLQ), 175 to 199 (LNHH…HVAI), 273 to 291 (IAHH…GHMY), 330 to 353 (VHFQ…QHMY), 369 to 395 (AALY…IFFI), 417 to 439 (AIIS…LYVH), and 517 to 535 (FLVH…LILV). 2 residues coordinate [4Fe-4S] cluster: cysteine 559 and cysteine 568. A run of 2 helical transmembrane segments spans residues 575-596 (AFYL…YWHW) and 643-665 (LSVW…MFLI). Chlorophyll a-binding residues include histidine 654, methionine 662, and tyrosine 670. Tryptophan 671 serves as a coordination point for phylloquinone. The helical transmembrane segment at 707-727 (LVGLAHFSVGYIFTYAAFLIA) threads the bilayer.

The protein belongs to the PsaA/PsaB family. The PsaA/B heterodimer binds the P700 chlorophyll special pair and subsequent electron acceptors. PSI consists of a core antenna complex that captures photons, and an electron transfer chain that converts photonic excitation into a charge separation. The eukaryotic PSI reaction center is composed of at least 11 subunits. P700 is a chlorophyll a/chlorophyll a' dimer, A0 is one or more chlorophyll a, A1 is one or both phylloquinones and FX is a shared 4Fe-4S iron-sulfur center. serves as cofactor.

It is found in the plastid. Its subcellular location is the chloroplast thylakoid membrane. The enzyme catalyses reduced [plastocyanin] + hnu + oxidized [2Fe-2S]-[ferredoxin] = oxidized [plastocyanin] + reduced [2Fe-2S]-[ferredoxin]. In terms of biological role, psaA and PsaB bind P700, the primary electron donor of photosystem I (PSI), as well as the electron acceptors A0, A1 and FX. PSI is a plastocyanin-ferredoxin oxidoreductase, converting photonic excitation into a charge separation, which transfers an electron from the donor P700 chlorophyll pair to the spectroscopically characterized acceptors A0, A1, FX, FA and FB in turn. Oxidized P700 is reduced on the lumenal side of the thylakoid membrane by plastocyanin. The chain is Photosystem I P700 chlorophyll a apoprotein A2 from Platanus occidentalis (Sycamore).